The chain runs to 396 residues: Elongation factor Tu (396 aa).

Residues 10–206 (KPHVNIGTIG…AVDNYIPEPE (197 aa)) form the tr-type G domain. The interval 19-26 (GHVDHGKT) is G1. 19–26 (GHVDHGKT) contributes to the GTP binding site. Mg(2+) is bound at residue Thr26. Residues 60 to 64 (GITIA) form a G2 region. Residues 81–84 (DCPG) form a G3 region. Residues 81-85 (DCPGH) and 136-139 (NKAD) contribute to the GTP site. The tract at residues 136–139 (NKAD) is G4. A G5 region spans residues 174–176 (SAL).

Belongs to the TRAFAC class translation factor GTPase superfamily. Classic translation factor GTPase family. EF-Tu/EF-1A subfamily. As to quaternary structure, monomer.

The protein resides in the cytoplasm. The catalysed reaction is GTP + H2O = GDP + phosphate + H(+). Its function is as follows. GTP hydrolase that promotes the GTP-dependent binding of aminoacyl-tRNA to the A-site of ribosomes during protein biosynthesis. The sequence is that of Elongation factor Tu from Geobacter sulfurreducens (strain ATCC 51573 / DSM 12127 / PCA).